We begin with the raw amino-acid sequence, 87 residues long: uncharacterized protein (87 aa).

An N-terminal signal peptide occupies residues 1 to 19; that stretch reads MLVLLVAVLVTAVYAFVHA. Residues 39–59 traverse the membrane as a helical segment; the sequence is LVILGAAVALASILYPVLGVL.

It to M.leprae ML2453.

The protein localises to the membrane. This is an uncharacterized protein from Mycobacterium bovis (strain ATCC BAA-935 / AF2122/97).